The chain runs to 163 residues: NADH-quinone oxidoreductase subunit I 1 (163 aa).

2 consecutive 4Fe-4S ferredoxin-type domains span residues Leu53–Gly83 and Val94–Asn123. Cys63, Cys66, Cys69, Cys73, Cys103, Cys106, Cys109, and Cys113 together coordinate [4Fe-4S] cluster.

This sequence belongs to the complex I 23 kDa subunit family. In terms of assembly, NDH-1 is composed of 14 different subunits. Subunits NuoA, H, J, K, L, M, N constitute the membrane sector of the complex. [4Fe-4S] cluster is required as a cofactor.

The protein resides in the cell inner membrane. It carries out the reaction a quinone + NADH + 5 H(+)(in) = a quinol + NAD(+) + 4 H(+)(out). Its function is as follows. NDH-1 shuttles electrons from NADH, via FMN and iron-sulfur (Fe-S) centers, to quinones in the respiratory chain. The immediate electron acceptor for the enzyme in this species is believed to be ubiquinone. Couples the redox reaction to proton translocation (for every two electrons transferred, four hydrogen ions are translocated across the cytoplasmic membrane), and thus conserves the redox energy in a proton gradient. The protein is NADH-quinone oxidoreductase subunit I 1 of Rhizobium etli (strain ATCC 51251 / DSM 11541 / JCM 21823 / NBRC 15573 / CFN 42).